The primary structure comprises 106 residues: BLOC-1-related complex subunit 7 (106 aa).

It belongs to the BORCS7 family. Component of the BLOC-one-related complex (BORC) which is composed of BLOC1S1, BLOC1S2, BORCS5, BORCS6, BORCS7, BORCS8, KXD1 and SNAPIN.

It is found in the lysosome membrane. Functionally, as part of the BORC complex may play a role in lysosomes movement and localization at the cell periphery. Associated with the cytosolic face of lysosomes, the BORC complex may recruit ARL8B and couple lysosomes to microtubule plus-end-directed kinesin motor. The protein is BLOC-1-related complex subunit 7 of Homo sapiens (Human).